The primary structure comprises 280 residues: uncharacterized protein (280 aa).

Transmembrane regions (helical) follow at residues isoleucine 3–isoleucine 23, phenylalanine 52–valine 72, isoleucine 81–isoleucine 101, asparagine 123–leucine 143, phenylalanine 196–glycine 216, and isoleucine 233–isoleucine 253.

Its subcellular location is the cell membrane. This is an uncharacterized protein from Rickettsia prowazekii (strain Madrid E).